The sequence spans 49 residues: Disintegrin echistatin-gamma (49 aa).

The region spanning 1–47 is the Disintegrin domain; the sequence is DCASGPCCRDCKFLEEGTICNMARGDDMDDYCNGKTCDCPRNPHKWP. Disulfide bonds link Cys2/Cys11, Cys7/Cys32, Cys8/Cys37, and Cys20/Cys39. The Cell attachment site signature appears at 24–26; the sequence is RGD.

This sequence belongs to the venom metalloproteinase (M12B) family. P-II subfamily. P-IIa sub-subfamily. As to quaternary structure, monomer. In terms of tissue distribution, expressed by the venom gland.

It is found in the secreted. Its function is as follows. Has antiplatelet activities on guinea pig, followed by human, rabbit and rat platelet-rich plasma. The sequence is that of Disintegrin echistatin-gamma from Echis pyramidum leakeyi (Leakey's carpet viper).